The primary structure comprises 257 residues: NAD-capped RNA hydrolase NudC (257 aa).

2 residues coordinate substrate: lysine 25 and arginine 69. Positions 98 and 101 each coordinate Zn(2+). A substrate-binding site is contributed by glutamate 111. Positions 116 and 119 each coordinate Zn(2+). Substrate is bound at residue tyrosine 124. Residues 125–248 (PQIAPCIIVA…TVARRLIEDT (124 aa)) form the Nudix hydrolase domain. Residues alanine 158, glutamate 174, and glutamate 178 each contribute to the a divalent metal cation site. A Nudix box motif is present at residues 159 to 180 (GFVEVGETLEQAVAREVMEESG). Residue 192–199 (QPWPFPQS) participates in substrate binding. Glutamate 219 serves as a coordination point for a divalent metal cation. A substrate-binding site is contributed by alanine 241.

The protein belongs to the Nudix hydrolase family. NudC subfamily. Homodimer. Mg(2+) is required as a cofactor. The cofactor is Mn(2+). Requires Zn(2+) as cofactor.

The enzyme catalyses a 5'-end NAD(+)-phospho-ribonucleoside in mRNA + H2O = a 5'-end phospho-adenosine-phospho-ribonucleoside in mRNA + beta-nicotinamide D-ribonucleotide + 2 H(+). It carries out the reaction NAD(+) + H2O = beta-nicotinamide D-ribonucleotide + AMP + 2 H(+). The catalysed reaction is NADH + H2O = reduced beta-nicotinamide D-ribonucleotide + AMP + 2 H(+). Its function is as follows. mRNA decapping enzyme that specifically removes the nicotinamide adenine dinucleotide (NAD) cap from a subset of mRNAs by hydrolyzing the diphosphate linkage to produce nicotinamide mononucleotide (NMN) and 5' monophosphate mRNA. The NAD-cap is present at the 5'-end of some mRNAs and stabilizes RNA against 5'-processing. Has preference for mRNAs with a 5'-end purine. Catalyzes the hydrolysis of a broad range of dinucleotide pyrophosphates. This chain is NAD-capped RNA hydrolase NudC, found in Shigella flexneri.